A 168-amino-acid polypeptide reads, in one-letter code: MATTITMQSSTILGNFILVTASFAVLIILIRVFAWDKITGIFEERANKIANDIDAAEEKLTAAANLVQQREDELVQGRIESQKIIQDAVERAKLEKKRILEQADVEIQGLKQKAQLEIEAEKREAQENLRVQVAELAVDLASKIILEDLDQQAHSNLIDRYLDKLGDK.

The chain crosses the membrane as a helical span at residues Ser-10–Ile-30.

This sequence belongs to the ATPase B chain family. In terms of assembly, F-type ATPases have 2 components, F(1) - the catalytic core - and F(0) - the membrane proton channel. F(1) has five subunits: alpha(3), beta(3), gamma(1), delta(1), epsilon(1). F(0) has three main subunits: a(1), b(2) and c(10-14). The alpha and beta chains form an alternating ring which encloses part of the gamma chain. F(1) is attached to F(0) by a central stalk formed by the gamma and epsilon chains, while a peripheral stalk is formed by the delta and b chains.

It localises to the cell membrane. In terms of biological role, f(1)F(0) ATP synthase produces ATP from ADP in the presence of a proton or sodium gradient. F-type ATPases consist of two structural domains, F(1) containing the extramembraneous catalytic core and F(0) containing the membrane proton channel, linked together by a central stalk and a peripheral stalk. During catalysis, ATP synthesis in the catalytic domain of F(1) is coupled via a rotary mechanism of the central stalk subunits to proton translocation. Its function is as follows. Component of the F(0) channel, it forms part of the peripheral stalk, linking F(1) to F(0). In Streptococcus suis (strain 98HAH33), this protein is ATP synthase subunit b.